We begin with the raw amino-acid sequence, 532 residues long: Metal-staphylopine-binding protein CntA (532 aa).

An N-terminal signal peptide occupies residues 1 to 20 (MRKLTKMSAMLLASGLILTG). Cys-21 carries the N-palmitoyl cysteine lipid modification. Residue Cys-21 is the site of S-diacylglycerol cysteine attachment. Staphylopine is bound by residues Arg-165, Arg-418, and Asn-448.

The protein belongs to the bacterial solute-binding protein 5 family. The complex is composed of two ATP-binding proteins (CntD and CntF), two transmembrane proteins (CntB and CntC) and a solute-binding protein (CntA).

The protein localises to the cell membrane. With respect to regulation, nickel/cobalt import is reduced in the presence of zinc. Functionally, part of the ABC transporter complex CntABCDF (Opp1) involved in the uptake of metal in complex with the metallophore staphylopine (StP). Involved in the import of divalent metals ions such as nickel, cobalt and zinc. Binds the metal via the metallophore StP, and transfers the StP-metal complex to the membrane-bound permease. Binds one molecule of StP/metal. Binds StP/Co(2+) and StP/Ni(2+) tighter than StP/Zn(2+). Plays a major role in nickel/cobalt import in zinc-depleted conditions. Contributes to virulence. Required for full urease activity in vitro. This Staphylococcus aureus (strain NCTC 8325 / PS 47) protein is Metal-staphylopine-binding protein CntA.